The chain runs to 575 residues: Dihydroxy-acid dehydratase (575 aa).

The segment at 1–25 (MPTTDSARAADIKQPDIKPRSRDVT) is disordered. A compositionally biased stretch (basic and acidic residues) spans 8–25 (RAADIKQPDIKPRSRDVT). [2Fe-2S] cluster is bound at residue cysteine 64. A Mg(2+)-binding site is contributed by aspartate 96. Cysteine 137 is a binding site for [2Fe-2S] cluster. Positions 138 and 139 each coordinate Mg(2+). Lysine 139 is subject to N6-carboxylysine. Cysteine 214 contacts [2Fe-2S] cluster. Glutamate 465 serves as a coordination point for Mg(2+). Serine 491 (proton acceptor) is an active-site residue.

The protein belongs to the IlvD/Edd family. Homodimer. It depends on [2Fe-2S] cluster as a cofactor. The cofactor is Mg(2+).

The catalysed reaction is (2R)-2,3-dihydroxy-3-methylbutanoate = 3-methyl-2-oxobutanoate + H2O. The enzyme catalyses (2R,3R)-2,3-dihydroxy-3-methylpentanoate = (S)-3-methyl-2-oxopentanoate + H2O. The protein operates within amino-acid biosynthesis; L-isoleucine biosynthesis; L-isoleucine from 2-oxobutanoate: step 3/4. It functions in the pathway amino-acid biosynthesis; L-valine biosynthesis; L-valine from pyruvate: step 3/4. In terms of biological role, functions in the biosynthesis of branched-chain amino acids. Catalyzes the dehydration of (2R,3R)-2,3-dihydroxy-3-methylpentanoate (2,3-dihydroxy-3-methylvalerate) into 2-oxo-3-methylpentanoate (2-oxo-3-methylvalerate) and of (2R)-2,3-dihydroxy-3-methylbutanoate (2,3-dihydroxyisovalerate) into 2-oxo-3-methylbutanoate (2-oxoisovalerate), the penultimate precursor to L-isoleucine and L-valine, respectively. This chain is Dihydroxy-acid dehydratase, found in Mycobacterium avium (strain 104).